A 393-amino-acid polypeptide reads, in one-letter code: Protein FAM53C (393 aa).

The residue at position 1 (Met-1) is an N-acetylmethionine. Residues 77–120 (HLRPPSRGNSPKEPPLSQVLSPEPPDPEKLPVPPAPPSKRHCRS) are disordered. Phosphoserine occurs at positions 122 and 162. Disordered stretches follow at residues 141-167 (LWTP…PKRV) and 204-283 (QPCA…ARKT). A compositionally biased stretch (polar residues) spans 204 to 215 (QPCATSPQSGSW). Phosphoserine is present on residues Ser-232, Ser-234, Ser-255, Ser-273, and Ser-299. The span at 241 to 256 (ASRFLPSARSSPASSP) shows a compositional bias: low complexity. Residues 343-355 (SCSPVEGSSQVLS) show a composition bias toward low complexity. The disordered stretch occupies residues 343 to 365 (SCSPVEGSSQVLSESEEEEEGSV).

Belongs to the FAM53 family.

The chain is Protein FAM53C from Mus musculus (Mouse).